Consider the following 572-residue polypeptide: Urease subunit alpha (572 aa).

The Urease domain maps to 136–572 (GGIDTHIHWI…VPLAQRYFLF (437 aa)). Residues His-141, His-143, and Lys-224 each coordinate Ni(2+). Residue Lys-224 is modified to N6-carboxylysine. His-226 is a substrate binding site. Ni(2+) is bound by residues His-253 and His-279. His-327 acts as the Proton donor in catalysis. Asp-367 serves as a coordination point for Ni(2+).

This sequence belongs to the metallo-dependent hydrolases superfamily. Urease alpha subunit family. Heterotrimer of UreA (gamma), UreB (beta) and UreC (alpha) subunits. Three heterotrimers associate to form the active enzyme. It depends on Ni cation as a cofactor. Carboxylation allows a single lysine to coordinate two nickel ions.

It localises to the cytoplasm. It catalyses the reaction urea + 2 H2O + H(+) = hydrogencarbonate + 2 NH4(+). It functions in the pathway nitrogen metabolism; urea degradation; CO(2) and NH(3) from urea (urease route): step 1/1. The chain is Urease subunit alpha from Actinobacillus pleuropneumoniae serotype 3 (strain JL03).